A 672-amino-acid polypeptide reads, in one-letter code: Spermatid perinuclear RNA-binding protein (672 aa).

In terms of domain architecture, DZF spans 5-363; it reads RSFANDDRHV…ALKRPFEDGL (359 aa). Residues 349–371 are disordered; it reads GAGSSALKRPFEDGLGDDKDPNK. Basic and acidic residues predominate over residues 357 to 371; that stretch reads RPFEDGLGDDKDPNK. Positions 387–453 constitute a DRBM 1 domain; that stretch reads DLMNALMRLN…AVKVLQAMGY (67 aa). The span at 467–476 shows a compositional bias: basic and acidic residues; the sequence is DEKSDNESKN. The interval 467 to 514 is disordered; that stretch reads DEKSDNESKNDTVSSNSSNNTGNSTTETSSTLEVRTQGPILTASGKNP. The segment covering 477 to 497 has biased composition (low complexity); it reads DTVSSNSSNNTGNSTTETSST. In terms of domain architecture, DRBM 2 spans 510–576; that stretch reads SGKNPVMELN…ALAALEKLFS (67 aa). Asymmetric dimethylarginine is present on residues arginine 612 and arginine 617.

In terms of assembly, interacts with EIF2AK2. Associates with microtubules; it is unsure whether such interaction is direct or indirect. Isoform 2 is expressed in spermatocytes (at protein level). Expressed in testis, thymus, ovary, liver, kidney, heart, spleen and brain. Expressed in cortex, dentate gyrus and Purkinje cell layer and granule cells of the cerebellum.

The protein localises to the cytoplasm. It is found in the cytoskeleton. Functionally, involved in spermatogenesis and sperm function. Plays a role in regulation of cell growth. Binds to double-stranded DNA and RNA. Binds most efficiently to poly(I:C) RNA than to poly(dI:dC) DNA. Also binds to single-stranded poly(G) RNA. Binds non-specifically to the mRNA PRM1 3'-UTR and adenovirus VA RNA. This is Spermatid perinuclear RNA-binding protein (Strbp) from Mus musculus (Mouse).